We begin with the raw amino-acid sequence, 668 residues long: MNPSTHVSSNGPTTPPHGPHTTFLPPTSPAPSTSSVAAATLCSPQRQAVSRYSGWSTEYTQWHSDLTTELLWHAHPRQVPMDEALAAAAAASYQVNPQHPANRYRHYEFQTLSLGTSEVDELLNCCAEETTCGGTQSTVLTNATNTTSCGGAVAGSSNVGPAGASAACDLDAELAGLETSAADFEQLRRLCAPLAIDTRCNLCAIISICLKQDCDQSWLLEYSLLCFKCSYAPRAALSTLIIMSEFTHLLQQHFSDLRIDDLFRHHVLTVFDFHLHFFINRCFEKQVGDAVDNENVTLNHLAVVRAMVMGEDTVPYNKPRRHPQQKQKNNPYHVEVPQELIDNFLEHSSPSRDRFVQLLFYMWAGTGVMSTTPLTELTHTKFARLDALSTASEREDARMMIEEEEDEEGGEKGGDDPGRHNGGGTSGGFSESTLKKNVGPIYLCPVPAFFTKNQTSTVCLLCELMACSYYDNVVLRELYRRVVSYCQNNVKMVDRIQLVLADLLRECTSPLGAAHEDVARCGLEAPTSPGGDSDYHGLSGVDGALARPDPVFCHVLRQAGVTGIYKHFFCDPQCAGNIRVTNEAVLFGRLHPHHVQEVKLAICHDNYYISRLPRRVWLCITLFKAFQITKRTYKGKVHLADFMRDFTQLLESCDIKLVDPTYVIDKYV.

Residues 1 to 10 (MNPSTHVSSN) are compositionally biased toward polar residues. A disordered region spans residues 1–35 (MNPSTHVSSNGPTTPPHGPHTTFLPPTSPAPSTSS). The span at 19–35 (PHTTFLPPTSPAPSTSS) shows a compositional bias: low complexity. Zn(2+) is bound by residues Cys-200, Cys-203, His-276, and Cys-282. The zinc finger 1 stretch occupies residues 200 to 282 (CNLCAIISIC…FHLHFFINRC (83 aa)). The disordered stretch occupies residues 401-430 (IEEEEDEEGGEKGGDDPGRHNGGGTSGGFS). The span at 410 to 419 (GEKGGDDPGR) shows a compositional bias: basic and acidic residues. Positions 459, 462, 567, and 574 each coordinate Zn(2+). The interval 459-574 (CLLCELMACS…YKHFFCDPQC (116 aa)) is zinc finger 2.

Belongs to the herpesviridae UL32 protein family.

It is found in the host cytoplasm. The protein resides in the host nucleus. In terms of biological role, plays a role in efficient localization of neo-synthesized capsids to nuclear replication compartments, thereby controlling cleavage and packaging of virus genomic DNA. The protein is Packaging protein UL32 homolog (UL52) of Homo sapiens (Human).